Consider the following 35-residue polypeptide: Conotoxin Cal6.1g (35 aa).

Residues 1–8 (GLSRPSKR) constitute a propeptide that is removed on maturation. Intrachain disulfides connect C9–C25, C16–C29, and C24–C34.

The protein belongs to the conotoxin O1 superfamily. Expressed by the venom duct.

The protein resides in the secreted. Functionally, probable neurotoxin with unknown target. Possibly targets ion channels. The protein is Conotoxin Cal6.1g of Californiconus californicus (California cone).